The sequence spans 359 residues: Phosphate acyltransferase (359 aa).

This sequence belongs to the PlsX family. Homodimer. Probably interacts with PlsY.

The protein resides in the cytoplasm. The enzyme catalyses a fatty acyl-[ACP] + phosphate = an acyl phosphate + holo-[ACP]. It functions in the pathway lipid metabolism; phospholipid metabolism. Functionally, catalyzes the reversible formation of acyl-phosphate (acyl-PO(4)) from acyl-[acyl-carrier-protein] (acyl-ACP). This enzyme utilizes acyl-ACP as fatty acyl donor, but not acyl-CoA. This chain is Phosphate acyltransferase, found in Citrobacter koseri (strain ATCC BAA-895 / CDC 4225-83 / SGSC4696).